A 363-amino-acid chain; its full sequence is Putative glutamate--cysteine ligase 2-3 (363 aa).

Belongs to the glutamate--cysteine ligase type 2 family. YbdK subfamily.

It carries out the reaction L-cysteine + L-glutamate + ATP = gamma-L-glutamyl-L-cysteine + ADP + phosphate + H(+). Its function is as follows. ATP-dependent carboxylate-amine ligase which exhibits weak glutamate--cysteine ligase activity. The sequence is that of Putative glutamate--cysteine ligase 2-3 from Rubrobacter xylanophilus (strain DSM 9941 / JCM 11954 / NBRC 16129 / PRD-1).